The sequence spans 138 residues: Large ribosomal subunit protein uL16 (138 aa).

Over residues 1–15 (MLSPKKVKYRKKQRG) the composition is skewed to basic residues. The segment at 1-21 (MLSPKKVKYRKKQRGRLSGEA) is disordered.

Belongs to the universal ribosomal protein uL16 family. Part of the 50S ribosomal subunit.

Functionally, binds 23S rRNA and is also seen to make contacts with the A and possibly P site tRNAs. The protein is Large ribosomal subunit protein uL16 of Borreliella burgdorferi (strain ATCC 35210 / DSM 4680 / CIP 102532 / B31) (Borrelia burgdorferi).